A 79-amino-acid polypeptide reads, in one-letter code: MSSIEDRVKKIVVEQLGVKEEEVTGEASFVDDLGADSLDTVELVMALEEEFECEIPDEEAEKITTVQQAVDYIKKHLEG.

Positions 2-77 (SSIEDRVKKI…QAVDYIKKHL (76 aa)) constitute a Carrier domain. S37 carries the post-translational modification O-(pantetheine 4'-phosphoryl)serine.

It belongs to the acyl carrier protein (ACP) family. 4'-phosphopantetheine is transferred from CoA to a specific serine of apo-ACP by AcpS. This modification is essential for activity because fatty acids are bound in thioester linkage to the sulfhydryl of the prosthetic group.

It localises to the cytoplasm. The protein operates within lipid metabolism; fatty acid biosynthesis. Functionally, carrier of the growing fatty acid chain in fatty acid biosynthesis. This Halorhodospira halophila (strain DSM 244 / SL1) (Ectothiorhodospira halophila (strain DSM 244 / SL1)) protein is Acyl carrier protein.